The chain runs to 205 residues: Holliday junction resolvase RecU (205 aa).

Residues T83, D85, E98, and Q117 each coordinate Mg(2+).

The protein belongs to the RecU family. Requires Mg(2+) as cofactor.

The protein localises to the cytoplasm. The catalysed reaction is Endonucleolytic cleavage at a junction such as a reciprocal single-stranded crossover between two homologous DNA duplexes (Holliday junction).. In terms of biological role, endonuclease that resolves Holliday junction intermediates in genetic recombination. Cleaves mobile four-strand junctions by introducing symmetrical nicks in paired strands. Promotes annealing of linear ssDNA with homologous dsDNA. Required for DNA repair, homologous recombination and chromosome segregation. The protein is Holliday junction resolvase RecU of Streptococcus suis (strain 98HAH33).